Reading from the N-terminus, the 759-residue chain is MDLRTMTQSLVTLAEDNMAFFSSQGPGETARRLSNVFAGVREQALGLEPTLGQLLGVAHHFDLDTETPANGYRSLVHTARCCLAHLLHKSRYVASNRKSIFFRASHNLAELEAYLAALTQLRAMAYYAQRLLTINRPGVLFFEGDEGLTADFLQEYVTLHKGCFYGRCLGFQFTPAIRPFLQTLSIGLVSFGEHYKRNETGLSVTASSLFTGGRFAIDPELRGAEFERIIQNLDVHFWKAFWNITEIEVLSSLANMASTTVRVSRLLSLPPEAFEMPLTSDPRLTVTISPPLAHTGPAPVLARLISYDLREGQDSKVLNSLAKSEGPRLELRPRPHQAPRSRALVVHIHGGGFVAQTSKSHEPYLKNWAQELGVPIFSIDYSLAPEAPFPRALEECFFAYCWAVKHCDLLGSTGERICLAGDSAGGNLCITVSLRAAAYGVRVPDGIMAAYPVTTLQSSASPSRLLSLMDPLLPLSVLSKCVSAYSGTEAEDHFDSDQKALGVMGLVQRDTSLFLRDLRLGASSWLNSFLELSGRKPQKTTSPTAESVRPTESMRRSVSEAALAQPEGLLGTDTLKKLTIKDLSNSEPSDSPEMSQSMETLGPSTPSDVNFFLRPGNSQEEAEAKDEVRPMDGVPRVRAAFPEGFHPRRSSQGVLHMPLYTSPIVKNPFMSPLLAPDSMLKTLPPVHLVACALDPMLDDSVMFARRLRDLGQPVTLKVVEDLPHGFLSLAALCRETRQATEFCVQRIRLILTPPAAPLN.

An Involved in the stabilization of the negatively charged intermediate by the formation of the oxyanion hole motif is present at residues His-349–Gly-351. Ser-423 is a catalytic residue. The interval Gly-534–Ser-553 is disordered. Ser-557 is subject to Phosphoserine. Position 559 is a phosphoserine; by AMPK (Ser-559). At Thr-574 the chain carries Phosphothreonine. The segment at Leu-583–Ser-604 is disordered. A compositionally biased stretch (polar residues) spans Asn-585–Ser-604. Residues Ser-597, Ser-618, Ser-650, and Ser-651 each carry the phosphoserine modification. Active-site residues include Asp-694 and His-724.

Belongs to the 'GDXG' lipolytic enzyme family. Monomer and homodimer. Interacts with CAVIN1 in the adipocyte cytoplasm. Interacts with PLIN5. Post-translationally, phosphorylation by AMPK reduces its translocation towards the lipid droplets.

It localises to the cell membrane. Its subcellular location is the membrane. The protein localises to the caveola. It is found in the cytoplasm. The protein resides in the cytosol. It localises to the lipid droplet. It catalyses the reaction a diacylglycerol + H2O = a monoacylglycerol + a fatty acid + H(+). The enzyme catalyses a triacylglycerol + H2O = a diacylglycerol + a fatty acid + H(+). It carries out the reaction a monoacylglycerol + H2O = glycerol + a fatty acid + H(+). The catalysed reaction is Hydrolyzes glycerol monoesters of long-chain fatty acids.. It catalyses the reaction cholesteryl (9Z-octadecenoate) + H2O = cholesterol + (9Z)-octadecenoate + H(+). The enzyme catalyses all-trans-retinyl hexadecanoate + H2O = all-trans-retinol + hexadecanoate + H(+). It carries out the reaction 1,2-di-(9Z-octadecenoyl)-glycerol + H2O = (9Z-octadecenoyl)-glycerol + (9Z)-octadecenoate + H(+). The catalysed reaction is 2-(5Z,8Z,11Z,14Z-eicosatetraenoyl)-glycerol + H2O = glycerol + (5Z,8Z,11Z,14Z)-eicosatetraenoate + H(+). It catalyses the reaction 1-(9Z-octadecenoyl)-glycerol + H2O = glycerol + (9Z)-octadecenoate + H(+). The enzyme catalyses 2-(9Z-octadecenoyl)-glycerol + H2O = glycerol + (9Z)-octadecenoate + H(+). It carries out the reaction 1-O-hexadecyl-2-acetyl-sn-glycerol + H2O = 1-O-hexadecyl-sn-glycerol + acetate + H(+). The catalysed reaction is 1,2-di-(9Z-octadecenoyl)-sn-glycerol + H2O = (9Z-octadecenoyl)-glycerol + (9Z)-octadecenoate + H(+). It catalyses the reaction 1,3-di-(9Z-octadecenoyl)-glycerol + H2O = 1-(9Z-octadecenoyl)-glycerol + (9Z)-octadecenoate + H(+). The enzyme catalyses 1,2-di-(9Z-octadecenoyl)-glycerol + (9Z)-octadecenoate + H(+) = 1,2,3-tri-(9Z-octadecenoyl)-glycerol + H2O. It carries out the reaction 2,3-di-(9Z)-octadecenoyl-sn-glycerol + H2O = 2-(9Z-octadecenoyl)-glycerol + (9Z)-octadecenoate + H(+). The catalysed reaction is 1,2,3-tri-(9Z-octadecenoyl)-glycerol + H2O = di-(9Z)-octadecenoylglycerol + (9Z)-octadecenoate + H(+). It catalyses the reaction 1,2-di-(9Z-octadecenoyl)-glycerol + H2O = 2-(9Z-octadecenoyl)-glycerol + (9Z)-octadecenoate + H(+). Its pathway is glycerolipid metabolism; triacylglycerol degradation. Its function is as follows. Lipase with broad substrate specificity, catalyzing the hydrolysis of triacylglycerols (TAGs), diacylglycerols (DAGs), monoacylglycerols (MAGs), cholesteryl esters and retinyl esters. Shows a preferential hydrolysis of DAGs over TAGs and MAGs and of the fatty acid (FA) esters at the sn-1 and sn-2 positions of the glycerol backbone in TAGs. Preferentially hydrolyzes FA esters at the sn-3 position of the glycerol backbone in DAGs. Catalyzes the hydrolysis of 2-arachidonoylglycerol, an endocannabinoid and of 2-acetyl monoalkylglycerol ether, the penultimate precursor of the pathway for de novo synthesis of platelet-activating factor. In adipose tissue and heart, it primarily hydrolyzes stored triglycerides to free fatty acids, while in steroidogenic tissues, it principally converts cholesteryl esters to free cholesterol for steroid hormone production. This Mus musculus (Mouse) protein is Hormone-sensitive lipase (Lipe).